A 178-amino-acid polypeptide reads, in one-letter code: Small ribosomal subunit protein bS16 (178 aa).

Residues Lys78–Ala178 are disordered. The span at Lys91 to Arg113 shows a compositional bias: basic and acidic residues. Low complexity predominate over residues Ala114–Glu127. The span at Ala128–Ala139 shows a compositional bias: acidic residues. Residues Ala140–Ala172 show a composition bias toward low complexity.

This sequence belongs to the bacterial ribosomal protein bS16 family.

The protein is Small ribosomal subunit protein bS16 of Phenylobacterium zucineum (strain HLK1).